The following is a 682-amino-acid chain: Potassium-transporting ATPase ATP-binding subunit (682 aa).

Transmembrane regions (helical) follow at residues 34–54 (PVMF…IAMA), 62–82 (ALFS…ANFA), 219–239 (IALT…TATL), and 254–274 (VLVA…LSAI). Residue D307 is the 4-aspartylphosphate intermediate of the active site. ATP contacts are provided by residues D344, E348, 377-384 (FTAQSRMS), and K395. The Mg(2+) site is built by D518 and D522. A run of 3 helical transmembrane segments spans residues 588 to 608 (FAII…LNIM), 616 to 636 (AILS…PLAL), and 656 to 676 (IYGL…DLLL).

It belongs to the cation transport ATPase (P-type) (TC 3.A.3) family. Type IA subfamily. The system is composed of three essential subunits: KdpA, KdpB and KdpC.

The protein localises to the cell inner membrane. The catalysed reaction is K(+)(out) + ATP + H2O = K(+)(in) + ADP + phosphate + H(+). Functionally, part of the high-affinity ATP-driven potassium transport (or Kdp) system, which catalyzes the hydrolysis of ATP coupled with the electrogenic transport of potassium into the cytoplasm. This subunit is responsible for energy coupling to the transport system and for the release of the potassium ions to the cytoplasm. This Escherichia coli (strain UTI89 / UPEC) protein is Potassium-transporting ATPase ATP-binding subunit.